A 415-amino-acid chain; its full sequence is uncharacterized protein (415 aa).

Disordered regions lie at residues 329–351 (KFNK…TESS) and 388–415 (KSMM…IITL). A compositionally biased stretch (acidic residues) spans 338–348 (LQNESGDDSET). Basic residues predominate over residues 399–409 (KSNRKSNKRSN).

This is an uncharacterized protein from Acanthamoeba polyphaga mimivirus (APMV).